Consider the following 353-residue polypeptide: Fe(3+) ions import ATP-binding protein FbpC (353 aa).

The ABC transporter domain occupies 9–239 (VTFQNVRKSF…PASSFIADFM (231 aa)). 41-48 (GPSGCGKT) contacts ATP.

This sequence belongs to the ABC transporter superfamily. Fe(3+) ion importer (TC 3.A.1.10) family. In terms of assembly, the complex is composed of two ATP-binding proteins (FbpC), two transmembrane proteins (FbpB) and a solute-binding protein (FbpA).

It is found in the cell inner membrane. It catalyses the reaction Fe(3+)(out) + ATP + H2O = Fe(3+)(in) + ADP + phosphate + H(+). Functionally, part of the ABC transporter complex FbpABC involved in Fe(3+) ions import. Responsible for energy coupling to the transport system. This Rhizobium etli (strain ATCC 51251 / DSM 11541 / JCM 21823 / NBRC 15573 / CFN 42) protein is Fe(3+) ions import ATP-binding protein FbpC.